The sequence spans 588 residues: Transcription factor tau 60 kDa subunit (588 aa).

A sufficient for SPT15-binding region spans residues 399–588; sequence LPKLPENFSM…VYCGTTLEVM (190 aa).

As to quaternary structure, heterodimer with TFC6. Component of the TFIIIC complex composed of TFC1, TFC3, TFC4, TFC6, TFC7 and TFC8. The subunits are organized in two globular domains, tauA and tauB, connected by a proteolysis-sensitive and flexible linker. Interacts with SPT15 and directly with TFC6.

Its subcellular location is the nucleus. In terms of biological role, TFIIIC mediates tRNA and 5S RNA gene activation by binding to intragenic promoter elements. Upstream of the transcription start site, TFIIIC assembles the initiation complex TFIIIB-TFIIIC-tDNA, which is sufficient for RNA polymerase III recruitment and function. Part of the tauB domain of TFIIIC that binds boxB DNA promoter sites of tRNA and similar genes. Plays a role in TFIIB assembly through its interaction with SPT15/TBP. Essential for cell viability. The sequence is that of Transcription factor tau 60 kDa subunit (TFC8) from Saccharomyces cerevisiae (strain ATCC 204508 / S288c) (Baker's yeast).